A 346-amino-acid chain; its full sequence is NADH-ubiquinone oxidoreductase chain 2 (346 aa).

11 helical membrane-spanning segments follow: residues 1–21, 25–45, 60–80, 95–115, 124–144, 149–169, 178–195, 200–219, 242–262, 274–294, and 326–346; these read MNPH…TITI, HWVL…PLIS, FLTQ…NAWA, CLLL…HFWF, LMTA…LLLM, LNPA…GWMG, ILAF…IILV, LALL…FMAL, ATLM…GFMP, EMTP…FFYL, and AILA…HAIV.

It belongs to the complex I subunit 2 family.

It localises to the mitochondrion inner membrane. It carries out the reaction a ubiquinone + NADH + 5 H(+)(in) = a ubiquinol + NAD(+) + 4 H(+)(out). Functionally, core subunit of the mitochondrial membrane respiratory chain NADH dehydrogenase (Complex I) that is believed to belong to the minimal assembly required for catalysis. Complex I functions in the transfer of electrons from NADH to the respiratory chain. The immediate electron acceptor for the enzyme is believed to be ubiquinone. The chain is NADH-ubiquinone oxidoreductase chain 2 (MT-ND2) from Sibirionetta formosa (Baikal teal).